The sequence spans 145 residues: Large ribosomal subunit protein uL11 (145 aa).

Belongs to the universal ribosomal protein uL11 family. Part of the ribosomal stalk of the 50S ribosomal subunit. Interacts with L10 and the large rRNA to form the base of the stalk. L10 forms an elongated spine to which L12 dimers bind in a sequential fashion forming a multimeric L10(L12)X complex. In terms of processing, one or more lysine residues are methylated.

Forms part of the ribosomal stalk which helps the ribosome interact with GTP-bound translation factors. The polypeptide is Large ribosomal subunit protein uL11 (Rickettsia typhi (strain ATCC VR-144 / Wilmington)).